We begin with the raw amino-acid sequence, 258 residues long: Phosphoadenosine 5'-phosphosulfate reductase (258 aa).

Cys244 (nucleophile; cysteine thiosulfonate intermediate) is an active-site residue.

It belongs to the PAPS reductase family. CysH subfamily.

Its subcellular location is the cytoplasm. It catalyses the reaction [thioredoxin]-disulfide + sulfite + adenosine 3',5'-bisphosphate + 2 H(+) = [thioredoxin]-dithiol + 3'-phosphoadenylyl sulfate. Its pathway is sulfur metabolism; hydrogen sulfide biosynthesis; sulfite from sulfate: step 3/3. Its function is as follows. Catalyzes the formation of sulfite from phosphoadenosine 5'-phosphosulfate (PAPS) using thioredoxin as an electron donor. This chain is Phosphoadenosine 5'-phosphosulfate reductase, found in Vibrio vulnificus (strain CMCP6).